Reading from the N-terminus, the 336-residue chain is Biotin synthase (336 aa).

Residues 54–281 (QAIQLSTLLS…KSYVRLSAGR (228 aa)) enclose the Radical SAM core domain. Residues C69, C73, and C76 each contribute to the [4Fe-4S] cluster site. [2Fe-2S] cluster is bound by residues C113, C144, C204, and R276.

This sequence belongs to the radical SAM superfamily. Biotin synthase family. As to quaternary structure, homodimer. The cofactor is [4Fe-4S] cluster. [2Fe-2S] cluster serves as cofactor.

It carries out the reaction (4R,5S)-dethiobiotin + (sulfur carrier)-SH + 2 reduced [2Fe-2S]-[ferredoxin] + 2 S-adenosyl-L-methionine = (sulfur carrier)-H + biotin + 2 5'-deoxyadenosine + 2 L-methionine + 2 oxidized [2Fe-2S]-[ferredoxin]. The protein operates within cofactor biosynthesis; biotin biosynthesis; biotin from 7,8-diaminononanoate: step 2/2. Its function is as follows. Catalyzes the conversion of dethiobiotin (DTB) to biotin by the insertion of a sulfur atom into dethiobiotin via a radical-based mechanism. This chain is Biotin synthase, found in Actinobacillus pleuropneumoniae serotype 7 (strain AP76).